The chain runs to 186 residues: Casparian strip membrane protein 1 (186 aa).

Residues 1 to 26 (MKSSPAELISEAKSSTQNSKMKRAVS) lie on the Cytoplasmic side of the membrane. The chain crosses the membrane as a helical span at residues 27 to 47 (VLDFILRLIAVVATLASAIAM). Topologically, residues 48 to 74 (GTTDESLPFFTQFIRFRAEYDDLPTLR) are extracellular. The chain crosses the membrane as a helical span at residues 75 to 95 (LFVVASAFASGYLILSLPLSI). Topologically, residues 96 to 107 (LHITRSSARRTR) are cytoplasmic. The chain crosses the membrane as a helical span at residues 108 to 128 (VILIILDMVMLTSLTAASSAA). Residues 129–161 (AAIVYLAHKGNAKANWFAFCQQYDSFCERISGS) lie on the Extracellular side of the membrane. Residues 162–182 (LIGSFIAIPLFIMLILFSALV) form a helical membrane-spanning segment. Residues 183–186 (LSKR) lie on the Cytoplasmic side of the membrane.

This sequence belongs to the Casparian strip membrane proteins (CASP) family. In terms of assembly, homodimer and heterodimers.

The protein localises to the cell membrane. Its function is as follows. Regulates membrane-cell wall junctions and localized cell wall deposition. Required for establishment of the Casparian strip membrane domain (CSD) and the subsequent formation of Casparian strips, a cell wall modification of the root endodermis that determines an apoplastic barrier between the intraorganismal apoplasm and the extraorganismal apoplasm and prevents lateral diffusion. This chain is Casparian strip membrane protein 1, found in Lotus japonicus (Lotus corniculatus var. japonicus).